The chain runs to 245 residues: Fibroblast growth factor 3 (245 aa).

The signal sequence occupies residues 1 to 17 (MGLIWLLLLSLLEPSWP). N-linked (GlcNAc...) asparagine glycosylation occurs at Asn-65. Disordered stretches follow at residues 137–181 (GSSG…FLPR) and 195–245 (QSSQ…LAVA). A compositionally biased stretch (basic residues) spans 161 to 173 (GRPRRGFKTRRTQ). The segment covering 226-238 (TLSTRATPSTQLH) has biased composition (polar residues).

The protein belongs to the heparin-binding growth factors family. In terms of assembly, interacts with FGFR1 and FGFR2. Affinity between fibroblast growth factors (FGFs) and their receptors is increased by heparan sulfate glycosaminoglycans that function as coreceptors. In terms of processing, glycosylated.

Its subcellular location is the nucleus. The protein resides in the endoplasmic reticulum. It localises to the golgi apparatus. Functionally, plays an important role in the regulation of embryonic development, cell proliferation, and cell differentiation. Required for normal ear development. The polypeptide is Fibroblast growth factor 3 (Fgf3) (Mus musculus (Mouse)).